The primary structure comprises 361 residues: Protein-glutamate methylesterase/protein-glutamine glutaminase 1 (361 aa).

The Response regulatory domain occupies 10–127 (KVLVVDDSAL…REGIEEKAQE (118 aa)). At Asp61 the chain carries 4-aspartylphosphate. In terms of domain architecture, CheB-type methylesterase spans 167-359 (FATTDKLIAV…ASVKRWYAEN (193 aa)). Residues Ser179, His205, and Asp301 contribute to the active site.

Belongs to the CheB family. Post-translationally, phosphorylated by CheA. Phosphorylation of the N-terminal regulatory domain activates the methylesterase activity.

Its subcellular location is the cytoplasm. It catalyses the reaction [protein]-L-glutamate 5-O-methyl ester + H2O = L-glutamyl-[protein] + methanol + H(+). The enzyme catalyses L-glutaminyl-[protein] + H2O = L-glutamyl-[protein] + NH4(+). Its function is as follows. Involved in chemotaxis. Part of a chemotaxis signal transduction system that modulates chemotaxis in response to various stimuli. Catalyzes the demethylation of specific methylglutamate residues introduced into the chemoreceptors (methyl-accepting chemotaxis proteins or MCP) by CheR. Also mediates the irreversible deamidation of specific glutamine residues to glutamic acid. The sequence is that of Protein-glutamate methylesterase/protein-glutamine glutaminase 1 from Hahella chejuensis (strain KCTC 2396).